The sequence spans 199 residues: UPF0301 protein Vapar_4617 (199 aa).

It belongs to the UPF0301 (AlgH) family.

In Variovorax paradoxus (strain S110), this protein is UPF0301 protein Vapar_4617.